Here is a 312-residue protein sequence, read N- to C-terminus: Ornithine carbamoyltransferase, catabolic (312 aa).

Carbamoyl phosphate-binding positions include 57–60 (STRT), Gln84, Arg108, and 135–138 (HPTQ). L-ornithine contacts are provided by residues Asn167, Asp231, and 235–236 (SM). 272–273 (CL) contributes to the carbamoyl phosphate binding site.

The protein belongs to the aspartate/ornithine carbamoyltransferase superfamily. OTCase family.

It is found in the cytoplasm. The enzyme catalyses carbamoyl phosphate + L-ornithine = L-citrulline + phosphate + H(+). It participates in amino-acid degradation; L-arginine degradation via ADI pathway; carbamoyl phosphate from L-arginine: step 2/2. Reversibly catalyzes the transfer of the carbamoyl group from carbamoyl phosphate (CP) to the N(epsilon) atom of ornithine (ORN) to produce L-citrulline. This chain is Ornithine carbamoyltransferase, catabolic (arcB), found in Mycoplasma capricolum subsp. capripneumoniae.